The chain runs to 474 residues: Trifunctional enzyme subunit beta, mitochondrial (474 aa).

The transit peptide at 1-33 (MTILTYPFKNLPTASKWALRFSIRPLSCSSQLR) directs the protein to the mitochondrion. An N6-acetyllysine; alternate modification is found at Lys72. Position 72 is an N6-succinyllysine; alternate (Lys72). The active-site Acyl-thioester intermediate is the Cys138. Residues 173-220 (IRHSRKMRKLMLDLNKAKSMGQRLSLISKFRFNFLAPELPAVSEFSTS) lie within the membrane without spanning it. Lys188 is subject to N6-acetyllysine; alternate. At Lys188 the chain carries N6-succinyllysine; alternate. An N6-succinyllysine mark is found at Lys190, Lys272, and Lys291. Lys293 carries the post-translational modification N6-acetyllysine; alternate. Residue Lys293 is modified to N6-succinyllysine; alternate. Residue Lys298 is modified to N6-acetyllysine. Position 332 is an N6-acetyllysine; alternate (Lys332). An N6-succinyllysine; alternate modification is found at Lys332. An N6-acetyllysine mark is found at Lys348 and Lys361. Cys458 acts as the Proton donor/acceptor in catalysis.

The protein belongs to the thiolase-like superfamily. Thiolase family. As to quaternary structure, heterotetramer of 2 alpha/HADHA and 2 beta/HADHB subunits; forms the mitochondrial trifunctional enzyme. Also purified as higher order heterooligomers including a 4 alpha/HADHA and 4 beta/HADHB heterooligomer which physiological significance remains unclear. The mitochondrial trifunctional enzyme interacts with MTLN. Interacts with RSAD2/viperin.

It is found in the mitochondrion. It localises to the mitochondrion inner membrane. The protein localises to the mitochondrion outer membrane. The protein resides in the endoplasmic reticulum. The enzyme catalyses an acyl-CoA + acetyl-CoA = a 3-oxoacyl-CoA + CoA. The catalysed reaction is butanoyl-CoA + acetyl-CoA = 3-oxohexanoyl-CoA + CoA. It catalyses the reaction hexanoyl-CoA + acetyl-CoA = 3-oxooctanoyl-CoA + CoA. It carries out the reaction octanoyl-CoA + acetyl-CoA = 3-oxodecanoyl-CoA + CoA. The enzyme catalyses decanoyl-CoA + acetyl-CoA = 3-oxododecanoyl-CoA + CoA. The catalysed reaction is dodecanoyl-CoA + acetyl-CoA = 3-oxotetradecanoyl-CoA + CoA. It catalyses the reaction tetradecanoyl-CoA + acetyl-CoA = 3-oxohexadecanoyl-CoA + CoA. The protein operates within lipid metabolism; fatty acid beta-oxidation. In terms of biological role, mitochondrial trifunctional enzyme catalyzes the last three of the four reactions of the mitochondrial beta-oxidation pathway. The mitochondrial beta-oxidation pathway is the major energy-producing process in tissues and is performed through four consecutive reactions breaking down fatty acids into acetyl-CoA. Among the enzymes involved in this pathway, the trifunctional enzyme exhibits specificity for long-chain fatty acids. Mitochondrial trifunctional enzyme is a heterotetrameric complex composed of two proteins, the trifunctional enzyme subunit alpha/HADHA carries the 2,3-enoyl-CoA hydratase and the 3-hydroxyacyl-CoA dehydrogenase activities, while the trifunctional enzyme subunit beta/HADHB described here bears the 3-ketoacyl-CoA thiolase activity. This is Trifunctional enzyme subunit beta, mitochondrial (HADHB) from Homo sapiens (Human).